A 250-amino-acid chain; its full sequence is Urease accessory protein UreD (250 aa).

This sequence belongs to the UreD family. As to quaternary structure, ureD, UreF and UreG form a complex that acts as a GTP-hydrolysis-dependent molecular chaperone, activating the urease apoprotein by helping to assemble the nickel containing metallocenter of UreC. The UreE protein probably delivers the nickel.

The protein localises to the cytoplasm. Its function is as follows. Required for maturation of urease via the functional incorporation of the urease nickel metallocenter. The protein is Urease accessory protein UreD of Aliarcobacter butzleri (strain RM4018) (Arcobacter butzleri).